Reading from the N-terminus, the 129-residue chain is MASRLLRGAGALAAQTLRARGPNGVAVVRSMASGGGVPTDEEQATGLEREVMMAARKGLDPYNILAPKAASGTKEDPNLVPSITNKRIVGCICEEDNSTVIWFWVHKGETQRCPSCGTHYKLVSHQLAH.

The N-terminal 31 residues, 1 to 31, are a transit peptide targeting the mitochondrion; the sequence is MASRLLRGAGALAAQTLRARGPNGVAVVRSM. Residues Lys68 and Lys86 each carry the N6-acetyllysine modification. Zn(2+)-binding residues include Cys91, Cys93, Cys113, and Cys116. At Lys121 the chain carries N6-acetyllysine.

The protein belongs to the cytochrome c oxidase subunit 5B family. Component of the cytochrome c oxidase (complex IV, CIV), a multisubunit enzyme composed of 14 subunits. The complex is composed of a catalytic core of 3 subunits MT-CO1, MT-CO2 and MT-CO3, encoded in the mitochondrial DNA, and 11 supernumerary subunits COX4I, COX5A, COX5B, COX6A, COX6B, COX6C, COX7A, COX7B, COX7C, COX8 and NDUFA4, which are encoded in the nuclear genome. The complex exists as a monomer or a dimer and forms supercomplexes (SCs) in the inner mitochondrial membrane with NADH-ubiquinone oxidoreductase (complex I, CI) and ubiquinol-cytochrome c oxidoreductase (cytochrome b-c1 complex, complex III, CIII), resulting in different assemblies (supercomplex SCI(1)III(2)IV(1) and megacomplex MCI(2)III(2)IV(2)).

Its subcellular location is the mitochondrion inner membrane. The protein operates within energy metabolism; oxidative phosphorylation. Component of the cytochrome c oxidase, the last enzyme in the mitochondrial electron transport chain which drives oxidative phosphorylation. The respiratory chain contains 3 multisubunit complexes succinate dehydrogenase (complex II, CII), ubiquinol-cytochrome c oxidoreductase (cytochrome b-c1 complex, complex III, CIII) and cytochrome c oxidase (complex IV, CIV), that cooperate to transfer electrons derived from NADH and succinate to molecular oxygen, creating an electrochemical gradient over the inner membrane that drives transmembrane transport and the ATP synthase. Cytochrome c oxidase is the component of the respiratory chain that catalyzes the reduction of oxygen to water. Electrons originating from reduced cytochrome c in the intermembrane space (IMS) are transferred via the dinuclear copper A center (CU(A)) of subunit 2 and heme A of subunit 1 to the active site in subunit 1, a binuclear center (BNC) formed by heme A3 and copper B (CU(B)). The BNC reduces molecular oxygen to 2 water molecules using 4 electrons from cytochrome c in the IMS and 4 protons from the mitochondrial matrix. This chain is Cytochrome c oxidase subunit 5B, mitochondrial (COX5B), found in Sus scrofa (Pig).